Reading from the N-terminus, the 457-residue chain is Transcription factor PCF7 (457 aa).

Residues 58–84 are a coiled coil; the sequence is STLHYLLQEKERAQQAHEQLQIYQQQQ. The segment at 95 to 119 is disordered; it reads RQPASRGPGGGGGGGDGGGSSGEST. A compositionally biased stretch (gly residues) spans 101–115; it reads GPGGGGGGGDGGGSS. The 59-residue stretch at 140–198 folds into the TCP domain; that stretch reads RKDRHSKVCTARGLRDRRVRLAAHTAIRFYDVQDRLGYDRPSKAVDWLMRNAKAAIDEL. Disordered regions lie at residues 199 to 231 and 263 to 299; these read PDRA…GFGN and KSLF…SNQQ. Composition is skewed to low complexity over residues 210–225 and 268–278; these read AAST…ATST and SSSTASGAASA.

In terms of assembly, forms homodimers and heterodimers.

It is found in the nucleus. Its function is as follows. Transcription activator. Binds the promoter core sequence 5'-GGNCC-3'. The protein is Transcription factor PCF7 (PCF7) of Oryza sativa subsp. japonica (Rice).